Consider the following 88-residue polypeptide: Serine protease inhibitor Kazal-type 11 (88 aa).

A signal peptide spans Met1–Ser24. The Kazal-like domain occupies Leu32–Lys87. A glycan (N-linked (GlcNAc...) asparagine) is linked at Asn37. Cystine bridges form between Cys38–Cys69, Cys47–Cys66, and Cys55–Cys85.

As to expression, expressed in epydiymis, in the caput. Also expressed in seminal vesicles.

It is found in the secreted. Functionally, probable serine protease inhibitor. This chain is Serine protease inhibitor Kazal-type 11 (Spink11), found in Mus musculus (Mouse).